Consider the following 155-residue polypeptide: MRPVVRVIREDWADAALPLPSYETAGAAGADLRANLPPESRAEGLVLAPLGRVLVPTGLRIEIPEGFEVQIRPRSGLALKHGISLPNSPGTIDSDYRGPLGVILVNLGAEPFRVAHGDRIAQMVVAPVVQAGFELVEGLGATARGAGGFGSTGTA.

Substrate contacts are provided by residues 74–76 (RSG), Asn-87, and 91–93 (TID).

The protein belongs to the dUTPase family. Requires Mg(2+) as cofactor.

The catalysed reaction is dUTP + H2O = dUMP + diphosphate + H(+). The protein operates within pyrimidine metabolism; dUMP biosynthesis; dUMP from dCTP (dUTP route): step 2/2. In terms of biological role, this enzyme is involved in nucleotide metabolism: it produces dUMP, the immediate precursor of thymidine nucleotides and it decreases the intracellular concentration of dUTP so that uracil cannot be incorporated into DNA. The polypeptide is Deoxyuridine 5'-triphosphate nucleotidohydrolase (Cereibacter sphaeroides (strain KD131 / KCTC 12085) (Rhodobacter sphaeroides)).